We begin with the raw amino-acid sequence, 135 residues long: Large ribosomal subunit protein uL16c (135 aa).

Over residues 1–17 the composition is skewed to basic residues; it reads MLSPKRTKFRKQHRNRM. Residues 1-22 are disordered; the sequence is MLSPKRTKFRKQHRNRMNGKAS.

The protein belongs to the universal ribosomal protein uL16 family. In terms of assembly, part of the 50S ribosomal subunit.

The protein resides in the plastid. It localises to the chloroplast. This Gracilaria tenuistipitata (Red alga) protein is Large ribosomal subunit protein uL16c.